The following is a 1020-amino-acid chain: C2 and GRAM domain-containing protein At1g03370 (1020 aa).

The C2 1 domain maps to 1-102 (MKLQVRVVEA…ENQSLGTVWY (102 aa)). Asp-17, Asp-23, Asp-69, Asp-71, and Asp-77 together coordinate Ca(2+). 2 stretches are compositionally biased toward polar residues: residues 134–144 (TSSGDQTSASR) and 158–172 (TCAS…SSIP). The segment at 134 to 172 (TSSGDQTSASRSPDLRLESPIDPSTCASPSRSDDASSIP) is disordered. In terms of domain architecture, VASt 1 spans 249–421 (SGGVVVDQLF…LLAQSVKPVD (173 aa)). The chain crosses the membrane as a helical span at residues 454–474 (FTVLSTFLIGIYVFVHIVFAI). Residues 517 to 635 (QARKQKGSDH…NISDLADVWV (119 aa)) form the C2 2 domain. Residues Asp-551, Asp-557, Asp-604, Phe-605, and Asp-606 each coordinate Ca(2+). The 64-residue stretch at 689 to 752 (AFQKLFGLPQ…LWEDIEEIQV (64 aa)) folds into the GRAM domain. A VASt 2 domain is found at 848–1010 (RFSEVFSLTL…MTFGFLEKEY (163 aa)).

It depends on Ca(2+) as a cofactor.

The protein resides in the membrane. The protein is C2 and GRAM domain-containing protein At1g03370 of Arabidopsis thaliana (Mouse-ear cress).